The sequence spans 54 residues: Soricidin (54 aa).

3 cysteine pairs are disulfide-bonded: cysteine 2–cysteine 23, cysteine 6–cysteine 27, and cysteine 9–cysteine 41.

The protein belongs to the opioid neuropeptide precursor family. In terms of assembly, member of a multiprotein complex. As to expression, salivary gland.

The protein resides in the secreted. Paralytic toxin that immobilizes a mealworm for 7 days. Inhibits the transient receptor potential cation channel subfamily V member 6 (TRPV6). This chain is Soricidin, found in Blarina brevicauda (Northern short-tailed shrew).